Here is a 602-residue protein sequence, read N- to C-terminus: Myotubularin (602 aa).

Residues 1 to 16 show a composition bias toward polar residues; it reads MATSSTPKYNSNSLEN. The disordered stretch occupies residues 1–33; sequence MATSSTPKYNSNSLENSVRRSPGDGINHEQNDE. The segment covering 17–33 has biased composition (basic and acidic residues); sequence SVRRSPGDGINHEQNDE. Residues 28 to 96 enclose the GRAM domain; it reads HEQNDEISRL…GVIARIEKMG (69 aa). The 376-residue stretch at 162–537 folds into the Myotubularin phosphatase domain; sequence GWAVYDAMTE…RHLELWVNYY (376 aa). A 1,2-diacyl-sn-glycero-3-phospho-(1D-myo-inositol-3,5-bisphosphate)-binding residues include asparagine 287, asparagine 312, and isoleucine 313. A 1,2-diacyl-sn-glycero-3-phospho-(1D-myo-inositol-3-phosphate) contacts are provided by asparagine 287, asparagine 312, and isoleucine 313. Cysteine 374 serves as the catalytic Phosphocysteine intermediate. Residues serine 375, aspartate 376, glycine 377, tryptophan 378, aspartate 379, arginine 380, lysine 416, and arginine 420 each coordinate a 1,2-diacyl-sn-glycero-3-phospho-(1D-myo-inositol-3,5-bisphosphate). Residues serine 375, aspartate 376, glycine 377, tryptophan 378, aspartate 379, and arginine 380 each coordinate a 1,2-diacyl-sn-glycero-3-phospho-(1D-myo-inositol-3-phosphate). A 1,2-diacyl-sn-glycero-3-phospho-(1D-myo-inositol-3-phosphate) is bound at residue arginine 420. Residues 577–602 form a disordered region; sequence NSPKINRSTTSPSSPSQMMPQVQTPF. Low complexity predominate over residues 584 to 602; it reads STTSPSSPSQMMPQVQTPF.

The protein belongs to the protein-tyrosine phosphatase family. Non-receptor class myotubularin subfamily.

The protein resides in the cytoplasm. It is found in the cell membrane. The protein localises to the cell projection. It localises to the filopodium. Its subcellular location is the ruffle. The protein resides in the late endosome. It is found in the myofibril. The protein localises to the sarcomere. It carries out the reaction a 1,2-diacyl-sn-glycero-3-phospho-(1D-myo-inositol-3-phosphate) + H2O = a 1,2-diacyl-sn-glycero-3-phospho-(1D-myo-inositol) + phosphate. The enzyme catalyses a 1,2-diacyl-sn-glycero-3-phospho-(1D-myo-inositol-3,5-bisphosphate) + H2O = a 1,2-diacyl-sn-glycero-3-phospho-(1D-myo-inositol-5-phosphate) + phosphate. The catalysed reaction is 1,2-dioctanoyl-sn-glycero-3-phospho-(1-D-myo-inositol-3-phosphate) + H2O = 1,2-dioctanoyl-sn-glycero-3-phospho-(1D-myo-inositol) + phosphate. It catalyses the reaction 1,2-dioctanoyl-sn-glycero-3-phospho-(1D-myo-inositol-3,5-bisphosphate) + H2O = 1,2-dioctanoyl-sn-glycero-3-phospho-(1D-myo-inositol-5-phosphate) + phosphate. It carries out the reaction 1,2-dihexadecanoyl-sn-glycero-3-phospho-(1D-myo-inositol-3,5-phosphate) + H2O = 1,2-dihexadecanoyl-sn-glycero-3-phospho-(1D-myo-inositol-5-phosphate) + phosphate. Its function is as follows. Lipid phosphatase which dephosphorylates phosphatidylinositol 3-monophosphate (PI3P) and phosphatidylinositol 3,5-bisphosphate (PI(3,5)P2). This Xenopus laevis (African clawed frog) protein is Myotubularin (mtm1).